Here is a 150-residue protein sequence, read N- to C-terminus: Large ribosomal subunit protein uL11 (150 aa).

Belongs to the universal ribosomal protein uL11 family. Part of the ribosomal stalk of the 50S ribosomal subunit. Interacts with L10 and the large rRNA to form the base of the stalk. L10 forms an elongated spine to which L12 dimers bind in a sequential fashion forming a multimeric L10(L12)X complex. One or more lysine residues are methylated.

In terms of biological role, forms part of the ribosomal stalk which helps the ribosome interact with GTP-bound translation factors. The polypeptide is Large ribosomal subunit protein uL11 (Azobacteroides pseudotrichonymphae genomovar. CFP2).